Reading from the N-terminus, the 826-residue chain is (2S)-3-sulfopropanediol dehydratase (826 aa).

The region spanning 33-695 (PRVNRLRQAF…NTNASIDGRK (663 aa)) is the PFL domain. Cysteine 464 serves as the catalytic Cysteine radical intermediate. Catalysis depends on glutamate 466, which acts as the Proton acceptor. One can recognise a Glycine radical domain in the interval 706–826 (PVHTDGGSHD…DLIQRTELHF (121 aa)). Glycine radical is present on glycine 802.

It belongs to the glycyl radical enzyme (GRE) family. Requires the activating protein HpfH to generate the key active site glycyl radical on Gly-802 that is involved in catalysis.

The catalysed reaction is (2S)-3-sulfopropanediol = 3-oxopropane-1-sulfonate + H2O. It participates in organosulfur degradation; alkanesulfonate degradation. Its function is as follows. Involved in the degradation of the organosulfur compound 2(S)-dihydroxypropanesulfonate (DHPS). Catalyzes the radical-mediated dehydration of DHPS to produce 3-sulfopropionaldehyde (3-oxopropane-1-sulfonate). In Klebsiella oxytoca, this protein is (2S)-3-sulfopropanediol dehydratase.